The primary structure comprises 189 residues: Elongation factor P (189 aa).

It belongs to the elongation factor P family.

It is found in the cytoplasm. It participates in protein biosynthesis; polypeptide chain elongation. Its function is as follows. Involved in peptide bond synthesis. Stimulates efficient translation and peptide-bond synthesis on native or reconstituted 70S ribosomes in vitro. Probably functions indirectly by altering the affinity of the ribosome for aminoacyl-tRNA, thus increasing their reactivity as acceptors for peptidyl transferase. The protein is Elongation factor P of Ehrlichia chaffeensis (strain ATCC CRL-10679 / Arkansas).